We begin with the raw amino-acid sequence, 123 residues long: Beta-2-microglobulin (123 aa).

Positions 1-21 (MSRLFLFALLGHLCFLPYLDA) are cleaved as a signal peptide. In terms of domain architecture, Ig-like C1-type spans 29–118 (PRVQVYSRYP…STLNEPKVVK (90 aa)). The cysteines at positions 49 and 104 are disulfide-linked.

Belongs to the beta-2-microglobulin family. In terms of assembly, heterodimer of an alpha chain and a beta chain. Beta-2-microglobulin is the beta-chain of major histocompatibility complex class I molecules.

It is found in the secreted. Its function is as follows. Component of the class I major histocompatibility complex (MHC). Involved in the presentation of peptide antigens to the immune system. The chain is Beta-2-microglobulin (B2M) from Monodelphis domestica (Gray short-tailed opossum).